The sequence spans 383 residues: S-adenosylmethionine synthase (383 aa).

Position 22 (His-22) interacts with ATP. Mg(2+) is bound at residue Asp-24. Residue Glu-50 participates in K(+) binding. The L-methionine site is built by Glu-63 and Gln-99. The segment at 99–109 (QSLEINQAVLK) is flexible loop. Residues 160–162 (DMK), Asp-235, 241–242 (RK), Ser-258, and Lys-262 each bind ATP. Position 235 (Asp-235) interacts with L-methionine. Lys-266 serves as a coordination point for L-methionine.

The protein belongs to the AdoMet synthase family. In terms of assembly, homotetramer; dimer of dimers. Mg(2+) serves as cofactor. K(+) is required as a cofactor.

It is found in the cytoplasm. The enzyme catalyses L-methionine + ATP + H2O = S-adenosyl-L-methionine + phosphate + diphosphate. The protein operates within amino-acid biosynthesis; S-adenosyl-L-methionine biosynthesis; S-adenosyl-L-methionine from L-methionine: step 1/1. In terms of biological role, catalyzes the formation of S-adenosylmethionine (AdoMet) from methionine and ATP. The overall synthetic reaction is composed of two sequential steps, AdoMet formation and the subsequent tripolyphosphate hydrolysis which occurs prior to release of AdoMet from the enzyme. This chain is S-adenosylmethionine synthase, found in Mycoplasma genitalium (strain ATCC 33530 / DSM 19775 / NCTC 10195 / G37) (Mycoplasmoides genitalium).